A 410-amino-acid polypeptide reads, in one-letter code: Peptidase T (410 aa).

Histidine 78 provides a ligand contact to Zn(2+). Aspartate 80 is a catalytic residue. A Zn(2+)-binding site is contributed by aspartate 140. Glutamate 174 acts as the Proton acceptor in catalysis. Zn(2+) is bound by residues glutamate 175, aspartate 197, and histidine 379.

The protein belongs to the peptidase M20B family. Zn(2+) is required as a cofactor.

The protein localises to the cytoplasm. It carries out the reaction Release of the N-terminal residue from a tripeptide.. Cleaves the N-terminal amino acid of tripeptides. This chain is Peptidase T, found in Staphylococcus saprophyticus subsp. saprophyticus (strain ATCC 15305 / DSM 20229 / NCIMB 8711 / NCTC 7292 / S-41).